Here is a 325-residue protein sequence, read N- to C-terminus: Undecaprenyl-phosphate 4-deoxy-4-formamido-L-arabinose transferase (325 aa).

Transmembrane regions (helical) follow at residues 235–255 (LSVV…LLMV) and 269–291 (VFTL…GLLG).

The protein belongs to the glycosyltransferase 2 family.

It is found in the cell inner membrane. The enzyme catalyses UDP-4-deoxy-4-formamido-beta-L-arabinose + di-trans,octa-cis-undecaprenyl phosphate = 4-deoxy-4-formamido-alpha-L-arabinopyranosyl di-trans,octa-cis-undecaprenyl phosphate + UDP. It participates in glycolipid biosynthesis; 4-amino-4-deoxy-alpha-L-arabinose undecaprenyl phosphate biosynthesis; 4-amino-4-deoxy-alpha-L-arabinose undecaprenyl phosphate from UDP-4-deoxy-4-formamido-beta-L-arabinose and undecaprenyl phosphate: step 1/2. It functions in the pathway bacterial outer membrane biogenesis; lipopolysaccharide biosynthesis. Catalyzes the transfer of 4-deoxy-4-formamido-L-arabinose from UDP to undecaprenyl phosphate. The modified arabinose is attached to lipid A and is required for resistance to polymyxin and cationic antimicrobial peptides. Essential for virulence in insects. The polypeptide is Undecaprenyl-phosphate 4-deoxy-4-formamido-L-arabinose transferase (Photorhabdus laumondii subsp. laumondii (strain DSM 15139 / CIP 105565 / TT01) (Photorhabdus luminescens subsp. laumondii)).